A 129-amino-acid polypeptide reads, in one-letter code: Translation initiation factor 5A (129 aa).

At Lys36 the chain carries Hypusine.

Belongs to the eIF-5A family.

It is found in the cytoplasm. Its function is as follows. Functions by promoting the formation of the first peptide bond. The protein is Translation initiation factor 5A of Picrophilus torridus (strain ATCC 700027 / DSM 9790 / JCM 10055 / NBRC 100828 / KAW 2/3).